We begin with the raw amino-acid sequence, 187 residues long: Large ribosomal subunit protein uL22 (187 aa).

Composition is skewed to basic and acidic residues over residues 158–168 (TKATDESEQAK) and 178–187 (RQKEKMMRNE). Residues 158 to 187 (TKATDESEQAKKKLSKKKLQRQKEKMMRNE) form a disordered region.

This sequence belongs to the universal ribosomal protein uL22 family.

The sequence is that of Large ribosomal subunit protein uL22 (RpL17) from Anopheles gambiae (African malaria mosquito).